The following is an 845-amino-acid chain: Beta-mannosidase B (845 aa).

Glu432 acts as the Proton donor in catalysis. Residues Asn717 and Asn723 are each glycosylated (N-linked (GlcNAc...) asparagine).

It belongs to the glycosyl hydrolase 2 family. Beta-mannosidase B subfamily.

It catalyses the reaction Hydrolysis of terminal, non-reducing beta-D-mannose residues in beta-D-mannosides.. It functions in the pathway glycan metabolism; N-glycan degradation. Its function is as follows. Exoglycosidase that cleaves the single beta-linked mannose residue from the non-reducing end of beta-mannosidic oligosaccharides of various complexity and length. Prefers mannobiose over mannotriose and has no activity against polymeric mannan. Is also severely restricted by galactosyl substitutions at the +1 subsite. The sequence is that of Beta-mannosidase B (mndB) from Aspergillus clavatus (strain ATCC 1007 / CBS 513.65 / DSM 816 / NCTC 3887 / NRRL 1 / QM 1276 / 107).